Consider the following 365-residue polypeptide: S-adenosylmethionine:tRNA ribosyltransferase-isomerase (365 aa).

The protein belongs to the QueA family. Monomer.

It is found in the cytoplasm. The enzyme catalyses 7-aminomethyl-7-carbaguanosine(34) in tRNA + S-adenosyl-L-methionine = epoxyqueuosine(34) in tRNA + adenine + L-methionine + 2 H(+). Its pathway is tRNA modification; tRNA-queuosine biosynthesis. Transfers and isomerizes the ribose moiety from AdoMet to the 7-aminomethyl group of 7-deazaguanine (preQ1-tRNA) to give epoxyqueuosine (oQ-tRNA). The sequence is that of S-adenosylmethionine:tRNA ribosyltransferase-isomerase from Prochlorococcus marinus (strain NATL2A).